A 56-amino-acid polypeptide reads, in one-letter code: UPF0391 membrane protein Jann_3570 (56 aa).

A run of 2 helical transmembrane segments spans residues 4 to 24 (WAVT…GGIA) and 29 to 48 (GIAQ…SLVA).

It belongs to the UPF0391 family.

It localises to the cell membrane. The chain is UPF0391 membrane protein Jann_3570 from Jannaschia sp. (strain CCS1).